The primary structure comprises 166 residues: Probable histone deacetylase complex subunit SAP18 (166 aa).

Residues 143–166 (GRRFNNREQGDRFDHRQRQRSPIR) are disordered. Positions 147 to 158 (NNREQGDRFDHR) are enriched in basic and acidic residues.

This sequence belongs to the SAP18 family. In terms of assembly, interacts with SIN3 and histone deacetylase.

Acts in transcription repression. Involved in the tethering of the SIN3 complex to core histone proteins. The protein is Probable histone deacetylase complex subunit SAP18 of Caenorhabditis elegans.